The following is a 206-amino-acid chain: N-(5'-phosphoribosyl)anthranilate isomerase (206 aa).

The protein belongs to the TrpF family.

It carries out the reaction N-(5-phospho-beta-D-ribosyl)anthranilate = 1-(2-carboxyphenylamino)-1-deoxy-D-ribulose 5-phosphate. It participates in amino-acid biosynthesis; L-tryptophan biosynthesis; L-tryptophan from chorismate: step 3/5. In Nitrosococcus oceani (strain ATCC 19707 / BCRC 17464 / JCM 30415 / NCIMB 11848 / C-107), this protein is N-(5'-phosphoribosyl)anthranilate isomerase.